Reading from the N-terminus, the 611-residue chain is tRNA uridine 5-carboxymethylaminomethyl modification enzyme MnmG (611 aa).

An FAD-binding site is contributed by G12–G17. Residue G271–F285 participates in NAD(+) binding.

The protein belongs to the MnmG family. In terms of assembly, homodimer. Heterotetramer of two MnmE and two MnmG subunits. FAD is required as a cofactor.

It localises to the cytoplasm. In terms of biological role, NAD-binding protein involved in the addition of a carboxymethylaminomethyl (cmnm) group at the wobble position (U34) of certain tRNAs, forming tRNA-cmnm(5)s(2)U34. The sequence is that of tRNA uridine 5-carboxymethylaminomethyl modification enzyme MnmG from Karelsulcia muelleri (strain GWSS) (Sulcia muelleri).